Reading from the N-terminus, the 246-residue chain is 3-deoxy-manno-octulosonate cytidylyltransferase (246 aa).

It belongs to the KdsB family.

It is found in the cytoplasm. It catalyses the reaction 3-deoxy-alpha-D-manno-oct-2-ulosonate + CTP = CMP-3-deoxy-beta-D-manno-octulosonate + diphosphate. It participates in nucleotide-sugar biosynthesis; CMP-3-deoxy-D-manno-octulosonate biosynthesis; CMP-3-deoxy-D-manno-octulosonate from 3-deoxy-D-manno-octulosonate and CTP: step 1/1. It functions in the pathway bacterial outer membrane biogenesis; lipopolysaccharide biosynthesis. Activates KDO (a required 8-carbon sugar) for incorporation into bacterial lipopolysaccharide in Gram-negative bacteria. This chain is 3-deoxy-manno-octulosonate cytidylyltransferase, found in Paramagnetospirillum magneticum (strain ATCC 700264 / AMB-1) (Magnetospirillum magneticum).